We begin with the raw amino-acid sequence, 156 residues long: Methylated-DNA--protein-cysteine methyltransferase (156 aa).

Cys126 acts as the Nucleophile; methyl group acceptor in catalysis.

Belongs to the MGMT family.

Its subcellular location is the cytoplasm. The enzyme catalyses a 6-O-methyl-2'-deoxyguanosine in DNA + L-cysteinyl-[protein] = S-methyl-L-cysteinyl-[protein] + a 2'-deoxyguanosine in DNA. The catalysed reaction is a 4-O-methyl-thymidine in DNA + L-cysteinyl-[protein] = a thymidine in DNA + S-methyl-L-cysteinyl-[protein]. Its function is as follows. Involved in the cellular defense against the biological effects of O6-methylguanine (O6-MeG) and O4-methylthymine (O4-MeT) in DNA. Repairs the methylated nucleobase in DNA by stoichiometrically transferring the methyl group to a cysteine residue in the enzyme. This is a suicide reaction: the enzyme is irreversibly inactivated. The sequence is that of Methylated-DNA--protein-cysteine methyltransferase from Methanosarcina acetivorans (strain ATCC 35395 / DSM 2834 / JCM 12185 / C2A).